The chain runs to 129 residues: Glycine cleavage system H protein (129 aa).

In terms of domain architecture, Lipoyl-binding spans threonine 24 to lysine 106. An N6-lipoyllysine modification is found at lysine 65.

The protein belongs to the GcvH family. The glycine cleavage system is composed of four proteins: P, T, L and H. (R)-lipoate serves as cofactor.

The glycine cleavage system catalyzes the degradation of glycine. The H protein shuttles the methylamine group of glycine from the P protein to the T protein. The chain is Glycine cleavage system H protein from Escherichia fergusonii (strain ATCC 35469 / DSM 13698 / CCUG 18766 / IAM 14443 / JCM 21226 / LMG 7866 / NBRC 102419 / NCTC 12128 / CDC 0568-73).